Here is a 281-residue protein sequence, read N- to C-terminus: Diaminopimelate epimerase (281 aa).

N13 and N66 together coordinate substrate. C75 functions as the Proton donor in the catalytic mechanism. Substrate is bound by residues 76–77, N164, N197, and 215–216; these read GN and ER. The active-site Proton acceptor is C224. 225–226 is a substrate binding site; it reads GT.

It belongs to the diaminopimelate epimerase family. As to quaternary structure, homodimer.

Its subcellular location is the cytoplasm. It catalyses the reaction (2S,6S)-2,6-diaminopimelate = meso-2,6-diaminopimelate. Its pathway is amino-acid biosynthesis; L-lysine biosynthesis via DAP pathway; DL-2,6-diaminopimelate from LL-2,6-diaminopimelate: step 1/1. Its function is as follows. Catalyzes the stereoinversion of LL-2,6-diaminopimelate (L,L-DAP) to meso-diaminopimelate (meso-DAP), a precursor of L-lysine and an essential component of the bacterial peptidoglycan. The sequence is that of Diaminopimelate epimerase from Rippkaea orientalis (strain PCC 8801 / RF-1) (Cyanothece sp. (strain PCC 8801)).